The sequence spans 353 residues: Paraneoplastic antigen Ma1 homolog (353 aa).

Belongs to the PNMA family. Testis and brain specific.

The protein localises to the nucleus. It localises to the nucleolus. The chain is Paraneoplastic antigen Ma1 homolog (Pnma1) from Rattus norvegicus (Rat).